Here is a 132-residue protein sequence, read N- to C-terminus: Agouti-signaling protein (132 aa).

An N-terminal signal peptide occupies residues 1-22 (MDVTXLLLATLLVFLCCFAAYS). Asparagine 39 carries an N-linked (GlcNAc...) asparagine glycan. A disordered region spans residues 62–93 (ISRKEAENKRSSKKEASKQKVARPRTPLSVPC). Over residues 64–79 (RKEAENKRSSKKEASK) the composition is skewed to basic and acidic residues. Cystine bridges form between cysteine 93-cysteine 108, cysteine 100-cysteine 114, cysteine 107-cysteine 125, cysteine 111-cysteine 132, and cysteine 116-cysteine 123. In terms of domain architecture, Agouti spans 93-132 (CVSTRGSCKPPAPACCHPCASCQCRFFRSACSCRVINVNC).

Its subcellular location is the secreted. Its function is as follows. Involved in the regulation of melanogenesis. The binding of ASP to MC1R precludes alpha-MSH initiated signaling and thus blocks production of cAMP, leading to a down-regulation of eumelanogenesis (brown/black pigment) and thus increasing synthesis of pheomelanin (yellow/red pigment). The chain is Agouti-signaling protein (ASIP) from Leontopithecus chrysomelas (Golden-headed lion tamarin).